A 374-amino-acid polypeptide reads, in one-letter code: Tetraacyldisaccharide 4'-kinase (374 aa).

43-50 is a binding site for ATP; sequence TMGGTGKT.

This sequence belongs to the LpxK family.

The catalysed reaction is a lipid A disaccharide + ATP = a lipid IVA + ADP + H(+). It participates in glycolipid biosynthesis; lipid IV(A) biosynthesis; lipid IV(A) from (3R)-3-hydroxytetradecanoyl-[acyl-carrier-protein] and UDP-N-acetyl-alpha-D-glucosamine: step 6/6. Its function is as follows. Transfers the gamma-phosphate of ATP to the 4'-position of a tetraacyldisaccharide 1-phosphate intermediate (termed DS-1-P) to form tetraacyldisaccharide 1,4'-bis-phosphate (lipid IVA). The protein is Tetraacyldisaccharide 4'-kinase of Leptospira biflexa serovar Patoc (strain Patoc 1 / Ames).